A 212-amino-acid polypeptide reads, in one-letter code: Ribonuclease HII (212 aa).

An RNase H type-2 domain is found at 28 to 212; that stretch reads SLIAGIDEVG…KSFAPVRQVF (185 aa). Positions 34, 35, and 127 each coordinate a divalent metal cation.

This sequence belongs to the RNase HII family. Mn(2+) is required as a cofactor. Mg(2+) serves as cofactor.

The protein localises to the cytoplasm. The catalysed reaction is Endonucleolytic cleavage to 5'-phosphomonoester.. Endonuclease that specifically degrades the RNA of RNA-DNA hybrids. This is Ribonuclease HII from Chlamydia abortus (strain DSM 27085 / S26/3) (Chlamydophila abortus).